A 134-amino-acid chain; its full sequence is Prefoldin subunit alpha (134 aa).

The protein belongs to the prefoldin subunit alpha family. As to quaternary structure, heterohexamer of two alpha and four beta subunits.

Its subcellular location is the cytoplasm. Its function is as follows. Molecular chaperone capable of stabilizing a range of proteins. Seems to fulfill an ATP-independent, HSP70-like function in archaeal de novo protein folding. The polypeptide is Prefoldin subunit alpha (Pyrobaculum calidifontis (strain DSM 21063 / JCM 11548 / VA1)).